Reading from the N-terminus, the 749-residue chain is Small G protein signaling modulator 3 (749 aa).

One can recognise a Rab-GAP TBC domain in the interval 114-305; the sequence is GIPHGMRPQL…RIWDLFFYEG (192 aa). Phosphoserine is present on Ser406. A coiled-coil region spans residues 415 to 439; it reads EDDLEALKAKNIKQTELVADLREAI. The SH3 domain occupies 480–539; the sequence is SHRRRAKALLDFERHDDDELGFRKNDIITIVSQKDEHCWVGELNGLRGWFPAKFVEVLDE. An RUN domain is found at 555 to 718; it reads GVTDLVRGTL…FAFSLSQDWE (164 aa).

This sequence belongs to the small G protein signaling modulator family. As to quaternary structure, interacts with GJA1. Interaction with GJA1 induces its degradation. Interacts via its RUN domain with the C-terminal region of NF2. Interacts with RAB3A, RAB4A, RAB5A, RAB8A, RAB11A, RAP1A, RAP1B, RAP2A, RAP2B and PDCD6IP. No interaction with RAB27A. As to expression, widely expressed.

Its subcellular location is the cytoplasm. Its function is as follows. May play a cooperative role in NF2-mediated growth suppression of cells. This Homo sapiens (Human) protein is Small G protein signaling modulator 3.